The primary structure comprises 1757 residues: 1-phosphatidylinositol-3-phosphate 5-kinase FAB1A (1757 aa).

The segment at 36–102 (DQSCPVCYEC…VCNYCYKQWE (67 aa)) adopts an FYVE-type zinc-finger fold. 8 residues coordinate Zn(2+): Cys-42, Cys-45, Cys-58, Cys-61, Cys-66, Cys-69, Cys-94, and Cys-97. Disordered stretches follow at residues 125–193 (ARSV…SDNQ), 276–297 (KTRQ…CEES), 313–346 (LPPE…YLRP), and 684–709 (AEKS…NFTS). A compositionally biased stretch (polar residues) spans 134–145 (NSSNCTIDSTAG). A compositionally biased stretch (acidic residues) spans 317–337 (PENEEDEREAVLSDDDGDEGD). Residues 1014 to 1087 (LQKESKEVIK…LQQMLNVVKD (74 aa)) adopt a coiled-coil conformation. Positions 1395 to 1719 (SFSLFDSVNL…RFRKAMTAYF (325 aa)) constitute a PIPK domain. A compositionally biased stretch (low complexity) spans 1729–1739 (AAVVPSNSSSA). The tract at residues 1729–1757 (AAVVPSNSSSAEVKEEEEKDNPQAVGNKS) is disordered.

Component of the PI(3,5)P2 regulatory complex at least composed of ATG18, SAC/FIG4, FAB1 and VAC14. Requires Mg(2+) as cofactor. It depends on Mn(2+) as a cofactor. Ubiquitous with highest expression levels in pollen, seed, and senescent leaves.

It is found in the endosome membrane. The enzyme catalyses a 1,2-diacyl-sn-glycero-3-phospho-(1D-myo-inositol-3-phosphate) + ATP = a 1,2-diacyl-sn-glycero-3-phospho-(1D-myo-inositol-3,5-bisphosphate) + ADP + H(+). The PI(3,5)P2 regulatory complex regulates both the synthesis and turnover of phosphatidylinositol 3,5-bisphosphate (PtdIns(3,5)P2). Catalyzes the phosphorylation of phosphatidylinositol 3-phosphate on the fifth hydroxyl of the myo-inositol ring, to form phosphatidylinositol 3,5-bisphosphate. Plays an important role in maintenance of endomembrane homeostasis including endocytosis, vacuole formation, and vacuolar acidification processes. Required for development of viable pollen. Might mediate recycling of auxin transporters. The protein is 1-phosphatidylinositol-3-phosphate 5-kinase FAB1A (FAB1A) of Arabidopsis thaliana (Mouse-ear cress).